The sequence spans 428 residues: MLQVREPSEHDIVTLMAELGRRGRAAARPLAVASTERKNAALLAMAEALEANTGRILAANKTDMEKGEAAGLSAAILDRLKLDEKRVRAIAEGIRAIADLDDPVGTVIAEWDRPNGLHIERVRTPLGVIGVIYESRPNVTADAGALCLKAGNAVILRGGSDSAASSAAIHSCLVEGLRKAGLPEDAIQRVPVTDREAVGEMLRGLGGNLDVIVPRGGRSLVERVQNEARVPVFAHLEGICHLYVDRSAKLDMAVALALNAKMRRTGVCGAAETLLVDRAVAGTHLVPILEALAAAGCEIRGGEDVRARFPSAISASEEDWRTEYLDAIISVKLVDGVFEAIEHIGTYSSHHTEAIVAEDPVAVQRFLNEIDSAILLHNASTQFADGGEFGMGAEIGIATGKMHARGPVGVEQLTSFKYRVHGSGQTRP.

The protein belongs to the gamma-glutamyl phosphate reductase family.

Its subcellular location is the cytoplasm. The catalysed reaction is L-glutamate 5-semialdehyde + phosphate + NADP(+) = L-glutamyl 5-phosphate + NADPH + H(+). It functions in the pathway amino-acid biosynthesis; L-proline biosynthesis; L-glutamate 5-semialdehyde from L-glutamate: step 2/2. Functionally, catalyzes the NADPH-dependent reduction of L-glutamate 5-phosphate into L-glutamate 5-semialdehyde and phosphate. The product spontaneously undergoes cyclization to form 1-pyrroline-5-carboxylate. This is Gamma-glutamyl phosphate reductase from Chelativorans sp. (strain BNC1).